A 313-amino-acid polypeptide reads, in one-letter code: Carbamate kinase 2 (313 aa).

Belongs to the carbamate kinase family.

The protein resides in the cytoplasm. The enzyme catalyses hydrogencarbonate + NH4(+) + ATP = carbamoyl phosphate + ADP + H2O + H(+). It functions in the pathway metabolic intermediate metabolism; carbamoyl phosphate degradation; CO(2) and NH(3) from carbamoyl phosphate: step 1/1. In Staphylococcus aureus (strain MRSA252), this protein is Carbamate kinase 2 (arcC2).